Here is an 81-residue protein sequence, read N- to C-terminus: Photosystem I iron-sulfur center (81 aa).

4Fe-4S ferredoxin-type domains follow at residues 2–31 and 39–68; these read SHSV…MVPW and IASS…IRVY. 8 residues coordinate [4Fe-4S] cluster: C11, C14, C17, C21, C48, C51, C54, and C58.

The cyanobacterial PSI reaction center is composed of one copy each of PsaA,B,C,D,E,F,I,J,K,L,M and X, and forms trimeric complexes. [4Fe-4S] cluster is required as a cofactor.

The protein localises to the cellular thylakoid membrane. The enzyme catalyses reduced [plastocyanin] + hnu + oxidized [2Fe-2S]-[ferredoxin] = oxidized [plastocyanin] + reduced [2Fe-2S]-[ferredoxin]. In terms of biological role, apoprotein for the two 4Fe-4S centers FA and FB of photosystem I (PSI); essential for photochemical activity. FB is the terminal electron acceptor of PSI, donating electrons to ferredoxin. The C-terminus interacts with PsaA/B/D and helps assemble the protein into the PSI complex. Required for binding of PsaD and PsaE to PSI. PSI is a plastocyanin/cytochrome c6-ferredoxin oxidoreductase, converting photonic excitation into a charge separation, which transfers an electron from the donor P700 chlorophyll pair to the spectroscopically characterized acceptors A0, A1, FX, FA and FB in turn. Mutant proteins with a 3Fe-4S center are unable to reconstitute PSI activity in vivo. The protein is Photosystem I iron-sulfur center of Synechocystis sp. (strain ATCC 27184 / PCC 6803 / Kazusa).